The following is a 276-amino-acid chain: Protein FAM151B (276 aa).

It belongs to the menorin family.

Functionally, essential for survival of retinal photoreceptor cells. This is Protein FAM151B (FAM151B) from Homo sapiens (Human).